Reading from the N-terminus, the 241-residue chain is 2-C-methyl-D-erythritol 4-phosphate cytidylyltransferase (241 aa).

The protein belongs to the IspD/TarI cytidylyltransferase family. IspD subfamily.

The enzyme catalyses 2-C-methyl-D-erythritol 4-phosphate + CTP + H(+) = 4-CDP-2-C-methyl-D-erythritol + diphosphate. Its pathway is isoprenoid biosynthesis; isopentenyl diphosphate biosynthesis via DXP pathway; isopentenyl diphosphate from 1-deoxy-D-xylulose 5-phosphate: step 2/6. Functionally, catalyzes the formation of 4-diphosphocytidyl-2-C-methyl-D-erythritol from CTP and 2-C-methyl-D-erythritol 4-phosphate (MEP). In Pseudoalteromonas translucida (strain TAC 125), this protein is 2-C-methyl-D-erythritol 4-phosphate cytidylyltransferase.